The primary structure comprises 489 residues: ATP synthase subunit beta, chloroplastic (489 aa).

170-177 (GGAGVGKT) lines the ATP pocket.

Belongs to the ATPase alpha/beta chains family. In terms of assembly, F-type ATPases have 2 components, CF(1) - the catalytic core - and CF(0) - the membrane proton channel. CF(1) has five subunits: alpha(3), beta(3), gamma(1), delta(1), epsilon(1). CF(0) has four main subunits: a(1), b(1), b'(1) and c(9-12).

Its subcellular location is the plastid. The protein localises to the chloroplast thylakoid membrane. The enzyme catalyses ATP + H2O + 4 H(+)(in) = ADP + phosphate + 5 H(+)(out). Its function is as follows. Produces ATP from ADP in the presence of a proton gradient across the membrane. The catalytic sites are hosted primarily by the beta subunits. In Zygnema circumcarinatum (Green alga), this protein is ATP synthase subunit beta, chloroplastic.